The primary structure comprises 186 residues: Small ribosomal subunit protein uS7 (186 aa).

The protein belongs to the universal ribosomal protein uS7 family. As to quaternary structure, part of the 30S ribosomal subunit.

One of the primary rRNA binding proteins, it binds directly to 16S rRNA where it nucleates assembly of the head domain of the 30S subunit. Is located at the subunit interface close to the decoding center. In Methanococcoides burtonii (strain DSM 6242 / NBRC 107633 / OCM 468 / ACE-M), this protein is Small ribosomal subunit protein uS7.